We begin with the raw amino-acid sequence, 348 residues long: Alpha-2-HS-glycoprotein (348 aa).

A signal peptide spans 1-18 (MKTLVLLLCFTLLWGCQS). One can recognise a Cystatin fetuin-A-type 1 domain in the interval 19–133 (APQGTGLGFR…QFSVMHTKCH (115 aa)). 6 disulfides stabilise this stretch: Cys32–Cys339, Cys89–Cys100, Cys114–Cys132, Cys146–Cys149, Cys208–Cys219, and Cys230–Cys247. N-linked (GlcNAc...) asparagine glycosylation occurs at Asn99. Ser134 and Ser138 each carry phosphoserine. The region spanning 144 to 255 (KVCPHCALLT…TCTAFPTQAN (112 aa)) is the Cystatin fetuin-A-type 2 domain. 2 N-linked (GlcNAc...) asparagine glycosylation sites follow: Asn156 and Asn176. 4 positions are modified to phosphoserine: Ser307, Ser311, Ser314, and Ser316.

It belongs to the fetuin family. Phosphorylated by FAM20C in the extracellular medium. Expressed by the liver and secreted in plasma.

The protein resides in the secreted. The sequence is that of Alpha-2-HS-glycoprotein (AHSG) from Meriones unguiculatus (Mongolian jird).